A 76-amino-acid chain; its full sequence is MNKALFLCLVVLCAAVVFAAEDLQKAKHAPFKRAAPCFCSGKPGRGDLWIFRGTCPGGYGYTSNCYKWPNICCYPH.

Residues 1 to 19 (MNKALFLCLVVLCAAVVFA) form the signal peptide. Positions 20 to 31 (AEDLQKAKHAPF) are excised as a propeptide. Cystine bridges form between cysteine 37–cysteine 72, cysteine 39–cysteine 65, and cysteine 55–cysteine 73. Residues 45-47 (RGD) carry the Cell attachment site motif.

Belongs to the sea anemone type 3 (BDS) potassium channel toxin family. As to expression, moderately expressed in the ectodermal tissue from the distal and proximal tentacles, body wall, and oral disk.

The protein localises to the secreted. Its subcellular location is the nematocyst. Its function is as follows. Is member of a fraction that shows antiangiogenic activity, since it inhibits human microvascular endothelial cells (HMEC) tubulogenesis. This protein could be a kunitz-type inhibitor with a RGD motif that could block angiogenesis in binding on integrins. Blocks Kv3 voltage-gated potassium channels. Reduces blood pressure. The sequence is that of Kappa-actitoxin-Avd4e from Anemonia viridis (Snakelocks anemone).